The chain runs to 121 residues: Flagellar protein FliT (121 aa).

Positions 1 to 50 are required for homodimerization; sequence MNHAPHLYFAWQQLVDKSQLMLRLATEEQWDELIASEMAYVNAVQEIAHL. Positions 60–98 are fliD binding; it reads MQEQLRPMLRLILDNESKVKQLLQIRMDELAKLVGQSSV.

It belongs to the FliT family. As to quaternary structure, homodimer. Interacts with FliD and FlhC.

It localises to the cytoplasm. Its subcellular location is the cytosol. Functionally, dual-function protein that regulates the transcription of class 2 flagellar operons and that also acts as an export chaperone for the filament-capping protein FliD. As a transcriptional regulator, acts as an anti-FlhDC factor; it directly binds FlhC, thus inhibiting the binding of the FlhC/FlhD complex to class 2 promoters, resulting in decreased expression of class 2 flagellar operons. As a chaperone, effects FliD transition to the membrane by preventing its premature polymerization, and by directing it to the export apparatus. The protein is Flagellar protein FliT of Shigella sonnei (strain Ss046).